Consider the following 393-residue polypeptide: UDP-N-acetylglucosamine--N-acetylmuramyl-(pentapeptide) pyrophosphoryl-undecaprenol N-acetylglucosamine transferase (393 aa).

Residues 15 to 17, Asn-129, Arg-171, Ser-211, and Gln-322 each bind UDP-N-acetyl-alpha-D-glucosamine; that span reads TAG.

This sequence belongs to the glycosyltransferase 28 family. MurG subfamily.

Its subcellular location is the cell membrane. The catalysed reaction is di-trans,octa-cis-undecaprenyl diphospho-N-acetyl-alpha-D-muramoyl-L-alanyl-D-glutamyl-meso-2,6-diaminopimeloyl-D-alanyl-D-alanine + UDP-N-acetyl-alpha-D-glucosamine = di-trans,octa-cis-undecaprenyl diphospho-[N-acetyl-alpha-D-glucosaminyl-(1-&gt;4)]-N-acetyl-alpha-D-muramoyl-L-alanyl-D-glutamyl-meso-2,6-diaminopimeloyl-D-alanyl-D-alanine + UDP + H(+). It functions in the pathway cell wall biogenesis; peptidoglycan biosynthesis. Its function is as follows. Cell wall formation. Catalyzes the transfer of a GlcNAc subunit on undecaprenyl-pyrophosphoryl-MurNAc-pentapeptide (lipid intermediate I) to form undecaprenyl-pyrophosphoryl-MurNAc-(pentapeptide)GlcNAc (lipid intermediate II). The protein is UDP-N-acetylglucosamine--N-acetylmuramyl-(pentapeptide) pyrophosphoryl-undecaprenol N-acetylglucosamine transferase of Bifidobacterium longum (strain DJO10A).